Consider the following 535-residue polypeptide: GMP synthase [glutamine-hydrolyzing] (535 aa).

The Glutamine amidotransferase type-1 domain maps to 21–211; the sequence is LIVILDFGSQ…VYHICDCEPT (191 aa). The active-site Nucleophile is the Cys98. Active-site residues include His185 and Glu187. A GMPS ATP-PPase domain is found at 212–410; it reads WTTAAFVEEA…LGLPEEIVQR (199 aa). 239–245 lines the ATP pocket; the sequence is SGGVDSS.

As to quaternary structure, homodimer.

The enzyme catalyses XMP + L-glutamine + ATP + H2O = GMP + L-glutamate + AMP + diphosphate + 2 H(+). The protein operates within purine metabolism; GMP biosynthesis; GMP from XMP (L-Gln route): step 1/1. In terms of biological role, catalyzes the synthesis of GMP from XMP. The sequence is that of GMP synthase [glutamine-hydrolyzing] from Thermosynechococcus vestitus (strain NIES-2133 / IAM M-273 / BP-1).